Reading from the N-terminus, the 1298-residue chain is Outer capsid protein VP1 (1298 aa).

The protein belongs to the aquareoviridae outer capsid VP1 protein family.

Its subcellular location is the virion. It catalyses the reaction a 5'-end diphospho-ribonucleoside in mRNA + GTP + H(+) = a 5'-end (5'-triphosphoguanosine)-ribonucleoside in mRNA + diphosphate. The enzyme catalyses a 5'-end (5'-triphosphoguanosine)-ribonucleoside in mRNA + S-adenosyl-L-methionine = a 5'-end (N(7)-methyl 5'-triphosphoguanosine)-ribonucleoside in mRNA + S-adenosyl-L-homocysteine. In terms of biological role, outer capsid protein involved in mRNA capping. Catalyzes the last 3 enzymatic activities for formation of the 5' cap structure on the viral plus-strand transcripts, namely the RNA guanylyltransferase, RNA-7N- and RNA-2'O-methyltransferase activities. This Ctenopharyngodon idella (Grass carp) protein is Outer capsid protein VP1 (S1).